Reading from the N-terminus, the 403-residue chain is Poly(rC)-binding protein 4 (403 aa).

KH domains lie at 17 to 67 (TLTL…TITG), 101 to 154 (PVTL…TVSG), and 241 to 293 (TSSQ…TITG).

The protein resides in the cytoplasm. Single-stranded nucleic acid binding protein that binds preferentially to oligo dC. The protein is Poly(rC)-binding protein 4 (PCBP4) of Bos taurus (Bovine).